Reading from the N-terminus, the 151-residue chain is Small ribosomal subunit protein bS6 (151 aa).

Residues 97–151 are disordered; it reads EAEPSAMMQKRDRDDRKDRDRGDRPRRRDDDFGGGDRGDRGDRGDRPERNFGGEN. Residues 105-151 show a composition bias toward basic and acidic residues; that stretch reads QKRDRDDRKDRDRGDRPRRRDDDFGGGDRGDRGDRGDRPERNFGGEN.

This sequence belongs to the bacterial ribosomal protein bS6 family.

Its function is as follows. Binds together with bS18 to 16S ribosomal RNA. This is Small ribosomal subunit protein bS6 from Methylorubrum extorquens (strain CM4 / NCIMB 13688) (Methylobacterium extorquens).